A 702-amino-acid polypeptide reads, in one-letter code: BRCA1-associated RING domain protein 1 (702 aa).

The RING-type zinc finger occupies 18–67; it reads CVKCKKPRGDLQYLGSSCKHAYCWECIATFQQKPSGKRSSVARHMCPSCA. 2 disordered regions span residues 153 to 205 and 281 to 346; these read DENR…TSVK and ASMS…YGTR. Polar residues predominate over residues 174–188; the sequence is ASPTRNSTKRPSTVS. Positions 312–321 are enriched in basic and acidic residues; the sequence is IKSDKIERRS. ANK repeat units follow at residues 347–376, 379–408, and 413–442; these read RGEA…CVNE, DGKT…VINA, and TLET…SIKI. Residues 601 to 702 form the BRCT domain; it reads MQPKLFAGCK…LGCSITTPPH (102 aa).

As to quaternary structure, heterodimer (via RING-type zinc finger) with brc-1 to form the core CeBCD complex. Brc-1-brd-1 heterodimer-containing CeBCD complexes bound to chromatin are activated as an E3-ubiquitin ligase in response to DNA damage. The heterodimer interacts with the recombinase rad-51 following ionizing irradiation; the interaction is direct. The heterodimer interacts the E2-ubiquitin-conjugating enzyme let-70 following ionizing irradiation. The heterodimer interacts with the pro-crossover proteins msh-5 and syp-3. Interacts with smt-3, tac-1 and ubc-9. Post-translationally, autoubiquitinated. Phosphorylation of CeBCD complexes is required for E3 ubiquitin-protein ligase activity.

It is found in the cytoplasm. Its subcellular location is the nucleus. The protein localises to the chromosome. The catalysed reaction is S-ubiquitinyl-[E2 ubiquitin-conjugating enzyme]-L-cysteine + [acceptor protein]-L-lysine = [E2 ubiquitin-conjugating enzyme]-L-cysteine + N(6)-ubiquitinyl-[acceptor protein]-L-lysine.. The protein operates within protein modification; protein ubiquitination. Its activity is regulated as follows. E3 ubiquitin-protein ligase activity of CeBCD complexes occurs at DNA damage sites. Following DNA damage, E3 ubiquitin-protein ligase activity is reduced by caffeine treatment (inhibitor of ATM and ATK kinase activity). Its function is as follows. Constituent of the CeBCD complex that possesses E3 ubiquitin-protein ligase activity. When bound to chromatin, the brc-1-brd-1 heterodimer within the CeBCD complex is inactive during normal conditions, but in response to DNA damage, the brc-1-brd-1 heterodimer associates with other proteins such as the recombinase rad-51 or the E2-ubiquitin-conjugating enzyme let-70, which activate the CeBCD complex as an E3-ubiquitin ligase. Moreover, association between the brc-1-brd-1 heterodimer and rad-51 and let-70, probably requires DNA checkpoint proteins such as atl-1 and mre-11 in order to induce ubiquitination at DNA damage sites. To this end, the brc-1-brd-1 heterodimer coordinates a diverse range of cellular pathways such as DNA damage repair, ubiquitination and transcriptional regulation to maintain genomic stability. Plays a role in triggering cellular responses at damage sites in response to DNA damage that may be induced by ionizing radiation for example. In particular, protects against chromosome non-disjunction and nuclear fragmentation during meiotic double-strand break repair to ensure sister chromatid recombination and aid chromosome stability. This chain is BRCA1-associated RING domain protein 1, found in Caenorhabditis elegans.